The following is a 185-amino-acid chain: Acireductone dioxygenase (185 aa).

His-101, His-103, Glu-107, and His-145 together coordinate Fe(2+). Ni(2+)-binding residues include His-101, His-103, Glu-107, and His-145.

The protein belongs to the acireductone dioxygenase (ARD) family. As to quaternary structure, monomer. Requires Fe(2+) as cofactor. Ni(2+) is required as a cofactor.

The catalysed reaction is 1,2-dihydroxy-5-(methylsulfanyl)pent-1-en-3-one + O2 = 3-(methylsulfanyl)propanoate + CO + formate + 2 H(+). It carries out the reaction 1,2-dihydroxy-5-(methylsulfanyl)pent-1-en-3-one + O2 = 4-methylsulfanyl-2-oxobutanoate + formate + 2 H(+). It functions in the pathway amino-acid biosynthesis; L-methionine biosynthesis via salvage pathway; L-methionine from S-methyl-5-thio-alpha-D-ribose 1-phosphate: step 5/6. Catalyzes 2 different reactions between oxygen and the acireductone 1,2-dihydroxy-3-keto-5-methylthiopentene (DHK-MTPene) depending upon the metal bound in the active site. Fe-containing acireductone dioxygenase (Fe-ARD) produces formate and 2-keto-4-methylthiobutyrate (KMTB), the alpha-ketoacid precursor of methionine in the methionine recycle pathway. Ni-containing acireductone dioxygenase (Ni-ARD) produces methylthiopropionate, carbon monoxide and formate, and does not lie on the methionine recycle pathway. The polypeptide is Acireductone dioxygenase (Synechococcus sp. (strain RCC307)).